A 270-amino-acid chain; its full sequence is tRNA pseudouridine synthase A (270 aa).

Catalysis depends on D51, which acts as the Nucleophile. Y109 lines the substrate pocket.

This sequence belongs to the tRNA pseudouridine synthase TruA family. Homodimer.

It carries out the reaction uridine(38/39/40) in tRNA = pseudouridine(38/39/40) in tRNA. Formation of pseudouridine at positions 38, 39 and 40 in the anticodon stem and loop of transfer RNAs. The chain is tRNA pseudouridine synthase A from Burkholderia vietnamiensis (strain G4 / LMG 22486) (Burkholderia cepacia (strain R1808)).